The sequence spans 137 residues: Protein yippee-like F37A8.5 (137 aa).

Positions 1-20 are disordered; it reads MHFRMKVLENSSKHNTPKKQ. The 98-residue stretch at 32–129 folds into the Yippee domain; the sequence is RCYSCIHCRA…IELAHMVKDN (98 aa). Zn(2+) contacts are provided by Cys36, Cys39, Cys92, and Cys95.

The protein belongs to the yippee family.

In Caenorhabditis elegans, this protein is Protein yippee-like F37A8.5.